A 321-amino-acid chain; its full sequence is Lipoyl synthase (321 aa).

Residues C68, C73, C79, C94, C98, C101, and S308 each contribute to the [4Fe-4S] cluster site. The Radical SAM core domain maps to 80–297; the sequence is FNHGTATFMI…KALADELGFT (218 aa).

Belongs to the radical SAM superfamily. Lipoyl synthase family. [4Fe-4S] cluster is required as a cofactor.

The protein localises to the cytoplasm. It catalyses the reaction [[Fe-S] cluster scaffold protein carrying a second [4Fe-4S](2+) cluster] + N(6)-octanoyl-L-lysyl-[protein] + 2 oxidized [2Fe-2S]-[ferredoxin] + 2 S-adenosyl-L-methionine + 4 H(+) = [[Fe-S] cluster scaffold protein] + N(6)-[(R)-dihydrolipoyl]-L-lysyl-[protein] + 4 Fe(3+) + 2 hydrogen sulfide + 2 5'-deoxyadenosine + 2 L-methionine + 2 reduced [2Fe-2S]-[ferredoxin]. Its pathway is protein modification; protein lipoylation via endogenous pathway; protein N(6)-(lipoyl)lysine from octanoyl-[acyl-carrier-protein]: step 2/2. Catalyzes the radical-mediated insertion of two sulfur atoms into the C-6 and C-8 positions of the octanoyl moiety bound to the lipoyl domains of lipoate-dependent enzymes, thereby converting the octanoylated domains into lipoylated derivatives. This is Lipoyl synthase from Shewanella baltica (strain OS223).